Consider the following 513-residue polypeptide: Na(+)/H(+) antiporter NhaB (513 aa).

12 helical membrane passes run 23 to 43 (LALIIFLIVNPLIFLISPFVA), 52 to 72 (IFTLAMALKCYPLLPGGLLAI), 97 to 117 (LLLMFMVAGIYFMKQLLLFIF), 120 to 140 (LLLSIRSKMLLSLSFCVAAAF), 144 to 164 (FLDALTVVAVVISVAVGFYGI), 202 to 222 (LMMHAGVGTALGGVMTMVGEP), 238 to 258 (FFLRMSPVTVPVLICGLLTCL), 303 to 323 (AIIGVWLVTALALHLAEVGLI), 348 to 368 (TESLPFTALLTVFFSVVAVII), 391 to 411 (LFYIFNGLLSSISDNVFVGTI), 447 to 467 (ATPNGQAAFLFLLTSALAPLI), and 475 to 495 (VWMALPYTLVLTLVGLLCVEF).

It belongs to the NhaB Na(+)/H(+) (TC 2.A.34) antiporter family.

It is found in the cell inner membrane. It catalyses the reaction 2 Na(+)(in) + 3 H(+)(out) = 2 Na(+)(out) + 3 H(+)(in). In terms of biological role, na(+)/H(+) antiporter that extrudes sodium in exchange for external protons. The protein is Na(+)/H(+) antiporter NhaB of Escherichia coli O6:K15:H31 (strain 536 / UPEC).